The primary structure comprises 168 residues: S-ribosylhomocysteine lyase (168 aa).

Fe cation-binding residues include H54, H58, and C128.

This sequence belongs to the LuxS family. Homodimer. Fe cation is required as a cofactor.

It catalyses the reaction S-(5-deoxy-D-ribos-5-yl)-L-homocysteine = (S)-4,5-dihydroxypentane-2,3-dione + L-homocysteine. In terms of biological role, involved in the synthesis of autoinducer 2 (AI-2) which is secreted by bacteria and is used to communicate both the cell density and the metabolic potential of the environment. The regulation of gene expression in response to changes in cell density is called quorum sensing. Catalyzes the transformation of S-ribosylhomocysteine (RHC) to homocysteine (HC) and 4,5-dihydroxy-2,3-pentadione (DPD). This Neisseria meningitidis serogroup C (strain 053442) protein is S-ribosylhomocysteine lyase.